The chain runs to 292 residues: Cyclic dipurine nucleotide synthase (292 aa).

Gln-47 contributes to the ATP binding site. A GTP-binding site is contributed by 48–52 (GSYRN). Residues Asp-61 and Asp-63 each coordinate Mg(2+). ATP is bound by residues Asp-63, 121-122 (NK), and Asp-136. Mg(2+) is bound at residue Asp-136. The GTP site is built by Lys-197 and Ser-216.

Belongs to the CD-NTase family. E01 subfamily. Mg(2+) serves as cofactor.

The catalysed reaction is 2 ATP = 3',3'-c-di-AMP + 2 diphosphate. The enzyme catalyses 2 GTP = 3',3'-c-di-GMP + 2 diphosphate. It catalyses the reaction GTP + ATP = 3',3'-cGAMP + 2 diphosphate. In terms of biological role, cyclic nucleotide synthase (second messenger synthase) of a CBASS antivirus system. CBASS (cyclic oligonucleotide-based antiphage signaling system) provides immunity against bacteriophage. The CD-NTase protein synthesizes cyclic nucleotides in response to infection; these serve as specific second messenger signals. The signals activate a diverse range of effectors, leading to bacterial cell death and thus abortive phage infection. A type I-A(GA) CBASS system. Its function is as follows. Cyclic dinucleotide synthase that catalyzes the synthesis of 3'3'-cyclic GMP-AMP (cGAMP) from GTP and ATP, and of c-di-AMP and c-di-GMP, that are second messengers for cell signal transduction. This chain is Cyclic dipurine nucleotide synthase, found in Elizabethkingia meningoseptica (Chryseobacterium meningosepticum).